Here is a 195-residue protein sequence, read N- to C-terminus: Endoribonuclease YbeY (195 aa).

Zn(2+)-binding residues include His-152, His-156, and His-162.

It belongs to the endoribonuclease YbeY family. Zn(2+) is required as a cofactor.

The protein localises to the cytoplasm. In terms of biological role, single strand-specific metallo-endoribonuclease involved in late-stage 70S ribosome quality control and in maturation of the 3' terminus of the 16S rRNA. The chain is Endoribonuclease YbeY from Rhodopseudomonas palustris (strain HaA2).